The primary structure comprises 779 residues: DNA topoisomerase 1 (779 aa).

The region spanning 1–111 (MKLVIVESPA…VESDDFFKRV (111 aa)) is the Toprim domain. Positions 7 and 80 each coordinate Mg(2+). One can recognise a Topo IA-type catalytic domain in the interval 132 to 568 (DTNLVNAQQA…FWSGFNNNIE (437 aa)). Residues 166-171 (SAGRVQ) form an interaction with DNA region. The O-(5'-phospho-DNA)-tyrosine intermediate role is filled by Y304. The segment at 600-627 (CPSCKTGQLSLKLGKFGAFLACSNYPEC) adopts a C4-type zinc-finger fold.

Belongs to the type IA topoisomerase family. In terms of assembly, monomer. Requires Mg(2+) as cofactor.

It catalyses the reaction ATP-independent breakage of single-stranded DNA, followed by passage and rejoining.. In terms of biological role, releases the supercoiling and torsional tension of DNA, which is introduced during the DNA replication and transcription, by transiently cleaving and rejoining one strand of the DNA duplex. Introduces a single-strand break via transesterification at a target site in duplex DNA. The scissile phosphodiester is attacked by the catalytic tyrosine of the enzyme, resulting in the formation of a DNA-(5'-phosphotyrosyl)-enzyme intermediate and the expulsion of a 3'-OH DNA strand. The free DNA strand then undergoes passage around the unbroken strand, thus removing DNA supercoils. Finally, in the religation step, the DNA 3'-OH attacks the covalent intermediate to expel the active-site tyrosine and restore the DNA phosphodiester backbone. The chain is DNA topoisomerase 1 from Rickettsia typhi (strain ATCC VR-144 / Wilmington).